We begin with the raw amino-acid sequence, 534 residues long: MASLLDCGAGLASANASFSTATDLSQENGLFSSWFERCSKTQIAVTIFAVLIAYDQFMYIWRKGSIAGPAFKIPFMGPFIQALYPKFDAYLAQWASGPLSCVSVFHKFVVLASDRDIAHKVFKSPTFVKPCIVPMAETLLRPSAWVFLQGRAHTEYRRGLNGLFTNKAISTYLPAQEKVYDDYFERFVAASEANKSKPMAFMRLFREINCALSCRTFFGDYISQDAVEKIAEDFYQVTAALELVNVPLSVYIPFTKCWRGKRTADAVLAEFASCAAACKANMAAGAEPKCIVDQWVLHMMESKRYNDRIAAGETGAEKPKNLIREFTDEEIGQTMFTFLFASQDASSSATTWLFQILAQRPDVLDRLREENLSVRGGNKETPFELSMLESLPYTNAVIKELLRYRPPVIFVPYEATKKFPVTPNYTISKGSMIVPSCYPALHDPQVYPDPETFDPERWITGDAESKTKNWLVFGAGAHDCLARKYVPLTMAAMIGKASLELDWVHHATSQSEEIRVFATLFPEDECQLVFTRQG.

Residues 43 to 61 (IAVTIFAVLIAYDQFMYIW) traverse the membrane as a helical segment. Cysteine 480 lines the heme pocket.

It belongs to the cytochrome P450 family. Heme is required as a cofactor.

It localises to the endoplasmic reticulum membrane. It catalyses the reaction 5-dehydroepisterol + NADPH + O2 + H(+) = ergosta-5,7,22,24(28)-tetraen-3beta-ol + NADP(+) + 2 H2O. It functions in the pathway steroid metabolism; ergosterol biosynthesis. Its function is as follows. C-22 sterol desaturase; part of the third module of ergosterol biosynthesis pathway that includes the late steps of the pathway. ERG5A and ERG5B convert 5-dehydroepisterol into ergosta-5,7,22,24(28)-tetraen-3beta-ol by forming the C-22(23) double bond in the sterol side chain. The third module or late pathway involves the ergosterol synthesis itself through consecutive reactions that mainly occur in the endoplasmic reticulum (ER) membrane. Firstly, the squalene synthase ERG9 catalyzes the condensation of 2 farnesyl pyrophosphate moieties to form squalene, which is the precursor of all steroids. Squalene synthase is crucial for balancing the incorporation of farnesyl diphosphate (FPP) into sterol and nonsterol isoprene synthesis. Secondly, squalene is converted into lanosterol by the consecutive action of the squalene epoxidase ERG1 and the lanosterol synthase ERG7. Then, the delta(24)-sterol C-methyltransferase ERG6 methylates lanosterol at C-24 to produce eburicol. Eburicol is the substrate of the sterol 14-alpha demethylase encoded by CYP51A, CYP51B and CYP51C, to yield 4,4,24-trimethyl ergosta-8,14,24(28)-trienol. CYP51B encodes the enzyme primarily responsible for sterol 14-alpha-demethylation, and plays an essential role in ascospore formation. CYP51A encodes an additional sterol 14-alpha-demethylase, induced on ergosterol depletion and responsible for the intrinsic variation in azole sensitivity. The third CYP51 isoform, CYP51C, does not encode a sterol 14-alpha-demethylase, but is required for full virulence on host wheat ears. The C-14 reductase ERG24 then reduces the C14=C15 double bond which leads to 4,4-dimethylfecosterol. A sequence of further demethylations at C-4, involving the C-4 demethylation complex containing the C-4 methylsterol oxidases ERG25, the sterol-4-alpha-carboxylate 3-dehydrogenase ERG26 and the 3-keto-steroid reductase ERG27, leads to the production of fecosterol via 4-methylfecosterol. ERG28 has a role as a scaffold to help anchor ERG25, ERG26 and ERG27 to the endoplasmic reticulum. The C-8 sterol isomerase ERG2 then catalyzes the reaction which results in unsaturation at C-7 in the B ring of sterols and thus converts fecosterol to episterol. The sterol-C5-desaturases ERG3A and ERG3BB then catalyze the introduction of a C-5 double bond in the B ring to produce 5-dehydroepisterol. The C-22 sterol desaturases ERG5A and ERG5B further convert 5-dehydroepisterol into ergosta-5,7,22,24(28)-tetraen-3beta-ol by forming the C-22(23) double bond in the sterol side chain. Finally, ergosta-5,7,22,24(28)-tetraen-3beta-ol is substrate of the C-24(28) sterol reductase ERG4 to produce ergosterol. The chain is C-22 sterol desaturase ERG5B from Gibberella zeae (strain ATCC MYA-4620 / CBS 123657 / FGSC 9075 / NRRL 31084 / PH-1) (Wheat head blight fungus).